Reading from the N-terminus, the 384-residue chain is Carbamoyl phosphate synthase small chain (384 aa).

Positions 1 to 192 (MPIAAAKPAL…FGPVAEQQGQ (192 aa)) are CPSase. Positions 51, 244, and 246 each coordinate L-glutamine. Residues 196–381 (TVVALDFGVK…VKLMRQQKAE (186 aa)) form the Glutamine amidotransferase type-1 domain. Cysteine 272 (nucleophile) is an active-site residue. Residues methionine 273, glutamine 276, asparagine 312, glycine 314, and phenylalanine 315 each coordinate L-glutamine. Residues histidine 354 and glutamate 356 contribute to the active site.

The protein belongs to the CarA family. Composed of two chains; the small (or glutamine) chain promotes the hydrolysis of glutamine to ammonia, which is used by the large (or ammonia) chain to synthesize carbamoyl phosphate. Tetramer of heterodimers (alpha,beta)4.

It catalyses the reaction hydrogencarbonate + L-glutamine + 2 ATP + H2O = carbamoyl phosphate + L-glutamate + 2 ADP + phosphate + 2 H(+). The enzyme catalyses L-glutamine + H2O = L-glutamate + NH4(+). The protein operates within amino-acid biosynthesis; L-arginine biosynthesis; carbamoyl phosphate from bicarbonate: step 1/1. It participates in pyrimidine metabolism; UMP biosynthesis via de novo pathway; (S)-dihydroorotate from bicarbonate: step 1/3. Small subunit of the glutamine-dependent carbamoyl phosphate synthetase (CPSase). CPSase catalyzes the formation of carbamoyl phosphate from the ammonia moiety of glutamine, carbonate, and phosphate donated by ATP, constituting the first step of 2 biosynthetic pathways, one leading to arginine and/or urea and the other to pyrimidine nucleotides. The small subunit (glutamine amidotransferase) binds and cleaves glutamine to supply the large subunit with the substrate ammonia. The chain is Carbamoyl phosphate synthase small chain from Synechocystis sp. (strain ATCC 27184 / PCC 6803 / Kazusa).